A 747-amino-acid polypeptide reads, in one-letter code: Protein neuralized (747 aa).

The 155-residue stretch at 97-251 (PLQFHTVHGD…NCTGIEFLDA (155 aa)) folds into the NHR 1 domain. Residues 280 to 292 (LPQQQQQLPQQQL) are compositionally biased toward low complexity. A disordered region spans residues 280-309 (LPQQQQQLPQQQLTAHHPLQQSRRSLPGGT). An NHR 2 domain is found at 359–514 (PVPFHITKGR…STQSLRMFRQ (156 aa)). The RING-type zinc-finger motif lies at 694–735 (CTICYENPIDSVLYMCGHMCMCYDCAIEQWRGVGGGQCPLCR).

It localises to the nucleus. In terms of biological role, involved in neurogenesis. Interacts with other neurogenic proteins in the specification of the neuroblast versus epidermoblast cell fate. The chain is Protein neuralized (neur) from Drosophila virilis (Fruit fly).